The following is a 62-amino-acid chain: Large ribosomal subunit protein uL30 (62 aa).

The protein belongs to the universal ribosomal protein uL30 family. As to quaternary structure, part of the 50S ribosomal subunit.

The sequence is that of Large ribosomal subunit protein uL30 from Heliobacterium modesticaldum (strain ATCC 51547 / Ice1).